The primary structure comprises 227 residues: ATP-dependent Clp protease proteolytic subunit (227 aa).

The active-site Nucleophile is the S120. H145 is an active-site residue.

Belongs to the peptidase S14 family. In terms of assembly, fourteen ClpP subunits assemble into 2 heptameric rings which stack back to back to give a disk-like structure with a central cavity, resembling the structure of eukaryotic proteasomes.

It is found in the cytoplasm. The enzyme catalyses Hydrolysis of proteins to small peptides in the presence of ATP and magnesium. alpha-casein is the usual test substrate. In the absence of ATP, only oligopeptides shorter than five residues are hydrolyzed (such as succinyl-Leu-Tyr-|-NHMec, and Leu-Tyr-Leu-|-Tyr-Trp, in which cleavage of the -Tyr-|-Leu- and -Tyr-|-Trp bonds also occurs).. Functionally, cleaves peptides in various proteins in a process that requires ATP hydrolysis. Has a chymotrypsin-like activity. Plays a major role in the degradation of misfolded proteins. This chain is ATP-dependent Clp protease proteolytic subunit, found in Rickettsia bellii (strain RML369-C).